The primary structure comprises 165 residues: uncharacterized protein (165 aa).

A helical membrane pass occupies residues 16–36 (ASISSILNFFFFYIMEYFVAV).

This sequence belongs to the asfivirus F165R family.

It localises to the host membrane. This is an uncharacterized protein from African swine fever virus (isolate Tick/Malawi/Lil 20-1/1983) (ASFV).